We begin with the raw amino-acid sequence, 94 residues long: Putative FXYD domain-containing ion transport regulator 8 (94 aa).

The first 18 residues, 1–18 (MEVVLIFVYSLLVPVVLA), serve as a signal peptide directing secretion. Residues 19–34 (SAAKEKEIDPFHYNYQ) are Extracellular-facing. Residues 35-58 (TLRIGGLVFDVVLFLVPSCHLLSH) form a helical membrane-spanning segment. At 59 to 94 (RCKCSFNQKPQDPGDKEAQVENFITANAKEPQKAKN) the chain is on the cytoplasmic side. The segment at 66-94 (QKPQDPGDKEAQVENFITANAKEPQKAKN) is disordered.

Belongs to the FXYD family.

Its subcellular location is the membrane. This Homo sapiens (Human) protein is Putative FXYD domain-containing ion transport regulator 8 (FXYD6P3).